A 148-amino-acid polypeptide reads, in one-letter code: Endoribonuclease YbeY (148 aa).

His-112, His-116, and His-122 together coordinate Zn(2+).

Belongs to the endoribonuclease YbeY family. The cofactor is Zn(2+).

The protein localises to the cytoplasm. Functionally, single strand-specific metallo-endoribonuclease involved in late-stage 70S ribosome quality control and in maturation of the 3' terminus of the 16S rRNA. The chain is Endoribonuclease YbeY from Albidiferax ferrireducens (strain ATCC BAA-621 / DSM 15236 / T118) (Rhodoferax ferrireducens).